The chain runs to 383 residues: Cytochrome b (383 aa).

A run of 4 helical transmembrane segments spans residues 31–51 (FGSLAGIMLVVQILTGIFLAM), 75–97 (WLMRYTHANGASFFFIVVYVHIF), 112–132 (LWCSGVIIFILMMATAFMGYV), and 178–198 (FFSLHFTFPFVIVGAVLIHLI). Positions 81 and 95 each coordinate heme b. H182 and H196 together coordinate heme b. H201 serves as a coordination point for a ubiquinone. 4 helical membrane passes run 224 to 244 (FYTKDLFGLMVLFLVFFIFIF), 288 to 308 (IGGVIAMFGSLIVLLTIPFTN), 320 to 340 (IFKVCYWLLVVAFLLLGWVGQ), and 347 to 367 (YTEIGIISMIYYFFFFIIIIP).

It belongs to the cytochrome b family. Fungal cytochrome b-c1 complex contains 10 subunits; 3 respiratory subunits, 2 core proteins and 5 low-molecular weight proteins. Cytochrome b-c1 complex is a homodimer. The cofactor is heme b.

It localises to the mitochondrion inner membrane. Component of the ubiquinol-cytochrome c reductase complex (complex III or cytochrome b-c1 complex) that is part of the mitochondrial respiratory chain. The b-c1 complex mediates electron transfer from ubiquinol to cytochrome c. Contributes to the generation of a proton gradient across the mitochondrial membrane that is then used for ATP synthesis. The sequence is that of Cytochrome b (cob) from Phytophthora megasperma (Potato pink rot fungus).